The chain runs to 343 residues: Cell cycle control protein 50C (343 aa).

Topologically, residues 1–34 are cytoplasmic; it reads MKRKCQDYESRLPDNTAVKQQQLPAFRLQLTASE. The chain crosses the membrane as a helical span at residues 35 to 55; it reads ILSGFFAIGLFCLGMGIILLL. Over 56 to 306 the chain is Extracellular; that stretch reads SAKSIKEVEI…STLTWSGGSS (251 aa). N66, N164, N205, and N265 each carry an N-linked (GlcNAc...) asparagine glycan. A helical membrane pass occupies residues 307-327; sequence LFLALAYLVTGAVTLLASFSM. The Cytoplasmic portion of the chain corresponds to 328-343; that stretch reads MALHLKLKERKTFFLQ.

This sequence belongs to the CDC50/LEM3 family.

It localises to the membrane. The sequence is that of Cell cycle control protein 50C (TMEM30C) from Bos taurus (Bovine).